The sequence spans 183 residues: Peptide deformylase (183 aa).

Fe cation is bound by residues Cys110 and His153. The active site involves Glu154. Fe cation is bound at residue His157.

This sequence belongs to the polypeptide deformylase family. It depends on Fe(2+) as a cofactor.

It carries out the reaction N-terminal N-formyl-L-methionyl-[peptide] + H2O = N-terminal L-methionyl-[peptide] + formate. In terms of biological role, removes the formyl group from the N-terminal Met of newly synthesized proteins. Requires at least a dipeptide for an efficient rate of reaction. N-terminal L-methionine is a prerequisite for activity but the enzyme has broad specificity at other positions. The sequence is that of Peptide deformylase from Listeria welshimeri serovar 6b (strain ATCC 35897 / DSM 20650 / CCUG 15529 / CIP 8149 / NCTC 11857 / SLCC 5334 / V8).